Here is a 381-residue protein sequence, read N- to C-terminus: Cytochrome b (381 aa).

4 helical membrane passes run 31-51 (FGFL…FLAM), 75-97 (WLLR…IHIF), 112-132 (VWVI…IGYV), and 178-198 (FFSL…VHLA). The heme b site is built by histidine 81 and histidine 95. Heme b contacts are provided by histidine 182 and histidine 196. Residue histidine 201 participates in a ubiquinone binding. 4 consecutive transmembrane segments (helical) span residues 224-244 (FIVK…IFVY), 288-308 (LGGV…PWIH), 320-340 (LYRL…WIGG), and 347-367 (YVII…ILLP).

This sequence belongs to the cytochrome b family. As to quaternary structure, the main subunits of complex b-c1 are: cytochrome b, cytochrome c1 and the Rieske protein. The cofactor is heme b.

Its subcellular location is the mitochondrion inner membrane. Functionally, component of the ubiquinol-cytochrome c reductase complex (complex III or cytochrome b-c1 complex) that is part of the mitochondrial respiratory chain. The b-c1 complex mediates electron transfer from ubiquinol to cytochrome c. Contributes to the generation of a proton gradient across the mitochondrial membrane that is then used for ATP synthesis. The polypeptide is Cytochrome b (MT-CYB) (Chondrus crispus (Carrageen Irish moss)).